Consider the following 320-residue polypeptide: Cytochrome f (320 aa).

The first 35 residues, 1–35, serve as a signal peptide directing secretion; that stretch reads MQTRNAFSWLKKQITRSISVSLMIYILTRTSISSA. Positions 36, 56, 59, and 60 each coordinate heme. A helical membrane pass occupies residues 286–306; the sequence is AQGLLFFLASVILAQIFLVLK.

This sequence belongs to the cytochrome f family. As to quaternary structure, the 4 large subunits of the cytochrome b6-f complex are cytochrome b6, subunit IV (17 kDa polypeptide, petD), cytochrome f and the Rieske protein, while the 4 small subunits are PetG, PetL, PetM and PetN. The complex functions as a dimer. Heme serves as cofactor.

The protein resides in the plastid. Its subcellular location is the chloroplast thylakoid membrane. Functionally, component of the cytochrome b6-f complex, which mediates electron transfer between photosystem II (PSII) and photosystem I (PSI), cyclic electron flow around PSI, and state transitions. The sequence is that of Cytochrome f from Nicotiana tomentosiformis (Tobacco).